The sequence spans 400 residues: Phosphoglycerate kinase (400 aa).

Residues 21-23, arginine 36, 59-62, arginine 119, and arginine 160 each bind substrate; these read DFN and HLGR. Residues lysine 211, glutamate 329, and 356–359 each bind ATP; that span reads GGDS.

This sequence belongs to the phosphoglycerate kinase family. As to quaternary structure, monomer.

The protein resides in the cytoplasm. It catalyses the reaction (2R)-3-phosphoglycerate + ATP = (2R)-3-phospho-glyceroyl phosphate + ADP. The protein operates within carbohydrate degradation; glycolysis; pyruvate from D-glyceraldehyde 3-phosphate: step 2/5. This chain is Phosphoglycerate kinase, found in Lactiplantibacillus plantarum (strain ATCC BAA-793 / NCIMB 8826 / WCFS1) (Lactobacillus plantarum).